We begin with the raw amino-acid sequence, 364 residues long: tRNA-specific 2-thiouridylase MnmA (364 aa).

Residues 12-19 and Met-38 contribute to the ATP site; that span reads GISGGVDS. An interaction with target base in tRNA region spans residues 98–100; the sequence is NPD. Residue Cys-103 is the Nucleophile of the active site. A disulfide bond links Cys-103 and Cys-199. Gly-127 lines the ATP pocket. An interaction with tRNA region spans residues 149–151; the sequence is KEQ. The active-site Cysteine persulfide intermediate is Cys-199. Positions 311–312 are interaction with tRNA; the sequence is RY.

The protein belongs to the MnmA/TRMU family.

The protein resides in the cytoplasm. The catalysed reaction is S-sulfanyl-L-cysteinyl-[protein] + uridine(34) in tRNA + AH2 + ATP = 2-thiouridine(34) in tRNA + L-cysteinyl-[protein] + A + AMP + diphosphate + H(+). Its function is as follows. Catalyzes the 2-thiolation of uridine at the wobble position (U34) of tRNA, leading to the formation of s(2)U34. The polypeptide is tRNA-specific 2-thiouridylase MnmA (Hahella chejuensis (strain KCTC 2396)).